Reading from the N-terminus, the 290-residue chain is Phosphatidylserine decarboxylase proenzyme (290 aa).

Active-site charge relay system; for autoendoproteolytic cleavage activity residues include Asp-96, His-153, and Ser-257. Catalysis depends on Ser-257, which acts as the Schiff-base intermediate with substrate; via pyruvic acid; for decarboxylase activity. At Ser-257 the chain carries Pyruvic acid (Ser); by autocatalysis.

It belongs to the phosphatidylserine decarboxylase family. PSD-B subfamily. Prokaryotic type I sub-subfamily. Heterodimer of a large membrane-associated beta subunit and a small pyruvoyl-containing alpha subunit. Pyruvate serves as cofactor. Post-translationally, is synthesized initially as an inactive proenzyme. Formation of the active enzyme involves a self-maturation process in which the active site pyruvoyl group is generated from an internal serine residue via an autocatalytic post-translational modification. Two non-identical subunits are generated from the proenzyme in this reaction, and the pyruvate is formed at the N-terminus of the alpha chain, which is derived from the carboxyl end of the proenzyme. The autoendoproteolytic cleavage occurs by a canonical serine protease mechanism, in which the side chain hydroxyl group of the serine supplies its oxygen atom to form the C-terminus of the beta chain, while the remainder of the serine residue undergoes an oxidative deamination to produce ammonia and the pyruvoyl prosthetic group on the alpha chain. During this reaction, the Ser that is part of the protease active site of the proenzyme becomes the pyruvoyl prosthetic group, which constitutes an essential element of the active site of the mature decarboxylase.

It is found in the cell membrane. The catalysed reaction is a 1,2-diacyl-sn-glycero-3-phospho-L-serine + H(+) = a 1,2-diacyl-sn-glycero-3-phosphoethanolamine + CO2. The protein operates within phospholipid metabolism; phosphatidylethanolamine biosynthesis; phosphatidylethanolamine from CDP-diacylglycerol: step 2/2. In terms of biological role, catalyzes the formation of phosphatidylethanolamine (PtdEtn) from phosphatidylserine (PtdSer). The chain is Phosphatidylserine decarboxylase proenzyme from Haemophilus influenzae (strain ATCC 51907 / DSM 11121 / KW20 / Rd).